Here is a 96-residue protein sequence, read N- to C-terminus: Co-chaperonin GroES (96 aa).

This sequence belongs to the GroES chaperonin family. In terms of assembly, heptamer of 7 subunits arranged in a ring. Interacts with the chaperonin GroEL.

The protein resides in the cytoplasm. Its function is as follows. Together with the chaperonin GroEL, plays an essential role in assisting protein folding. The GroEL-GroES system forms a nano-cage that allows encapsulation of the non-native substrate proteins and provides a physical environment optimized to promote and accelerate protein folding. GroES binds to the apical surface of the GroEL ring, thereby capping the opening of the GroEL channel. The chain is Co-chaperonin GroES from Verminephrobacter eiseniae (strain EF01-2).